The primary structure comprises 485 residues: MGCFSSKELQQSKRTILEKPLVDITKIYILGEELGRGNFGLTRKCVEKSTGKTFACKTILKTKLKDEECEEDVKREIRIMKQLSGEPNIVEFKNAYEDKDSVHIVMEYCGGGELYDKILALYDVGKSYSEKEAAGIIRSIVNVVKNCHYMGVMHRDLKPENFLLTSNDDNATVKVIDFGCSVFIEEGKVYQDLAGSDYYIAPEVLQGNYGKEADIWSAGIILYILLCGKSPFVKEPEGQMFNEIKSLEIDYSEEPWPLRDSRAIHLVKRMLDRNPKERISAAEVLGHPWMKEGEASDKPIDGVVLSRLKRFRDANKFKKVVLKFIAANLSEEEIKGLKTLFTNIDTDKSGNITLEELKTGLTRLGSNLSKTEVEQLMEAADMDGNGTIDIDEFISATMHRYKLDRDEHVYKAFQHFDKDNDGHITKEELEMAMKEDGAGDEGSIKQIIADADTDNDGKINFEEFRTMMRTESSLQPEGELLPIIN.

Gly-2 carries N-myristoyl glycine lipidation. Residues 28–290 (YILGEELGRG…AAEVLGHPWM (263 aa)) enclose the Protein kinase domain. ATP contacts are provided by residues 34-42 (LGRGNFGLT) and Lys-57. Asp-156 serves as the catalytic Proton acceptor. The residue at position 196 (Ser-196) is a Phosphoserine. The interval 295–325 (ASDKPIDGVVLSRLKRFRDANKFKKVVLKFI) is autoinhibitory domain. 4 EF-hand domains span residues 332–367 (EEIK…LGSN), 368–403 (LSKT…RYKL), 404–439 (DRDE…DGAG), and 444–474 (IKQI…ESSL). Asp-345, Asp-347, Ser-349, Asn-351, Glu-356, Asp-381, Asp-383, Asn-385, Thr-387, Glu-392, Asp-417, Asp-419, Asp-421, His-423, Glu-428, Asp-452, Asp-454, Asp-456, Lys-458, and Glu-463 together coordinate Ca(2+).

It belongs to the protein kinase superfamily. Ser/Thr protein kinase family. CDPK subfamily.

The protein localises to the membrane. It carries out the reaction L-seryl-[protein] + ATP = O-phospho-L-seryl-[protein] + ADP + H(+). It catalyses the reaction L-threonyl-[protein] + ATP = O-phospho-L-threonyl-[protein] + ADP + H(+). With respect to regulation, activated by calcium. Autophosphorylation may play an important role in the regulation of the kinase activity. May play a role in signal transduction pathways that involve calcium as a second messenger. This chain is Calcium-dependent protein kinase 27 (CPK27), found in Arabidopsis thaliana (Mouse-ear cress).